A 284-amino-acid polypeptide reads, in one-letter code: Protein SIC1 (284 aa).

Residues 1–89 (MTPSTPPRSR…SPFPKSSVKR (89 aa)) form a disordered region. Residue threonine 5 is modified to Phosphothreonine; by PHO85. Composition is skewed to polar residues over residues 18 to 52 (PSGNTSSSALMQGQKTPQKPSQNLVPVTPSTTKSF) and 61 to 79 (PNSNMGMTSPFNGLTSPQR). Phosphothreonine is present on threonine 33. Serine 76 bears the Phosphoserine mark. Threonine 173 bears the Phosphothreonine mark. Phosphoserine occurs at positions 198 and 201. Lysine derivative occurs at positions 268, 272, and 274.

In terms of assembly, interacts with HOG1. Post-translationally, phosphorylated by cyclin-dependent kinases CDC28 and PHO85 in association with G1-cyclins, promoting degradation of SIC1 and exit form G1. May contain a covalently attached chromophore. In terms of processing, the N-terminus is blocked.

Its subcellular location is the cytoplasm. The protein resides in the nucleus. Substrate and inhibitor of the cyclin-dependent protein kinase CDC28. Its activity could be important for faithful segregation of chromosomes to daughter cells. It acts in response to a signal from a post-start checkpoint. The sequence is that of Protein SIC1 (SIC1) from Saccharomyces cerevisiae (strain ATCC 204508 / S288c) (Baker's yeast).